Here is a 258-residue protein sequence, read N- to C-terminus: Type III pantothenate kinase (258 aa).

6–13 (DVGNTNTV) lines the ATP pocket. Residues Tyr100 and 107–110 (GADR) each bind substrate. Residue Asp109 is the Proton acceptor of the active site. Asp129 serves as a coordination point for K(+). Thr132 is a binding site for ATP. Substrate is bound at residue Thr184.

It belongs to the type III pantothenate kinase family. In terms of assembly, homodimer. Requires NH4(+) as cofactor. The cofactor is K(+).

Its subcellular location is the cytoplasm. It carries out the reaction (R)-pantothenate + ATP = (R)-4'-phosphopantothenate + ADP + H(+). It participates in cofactor biosynthesis; coenzyme A biosynthesis; CoA from (R)-pantothenate: step 1/5. In terms of biological role, catalyzes the phosphorylation of pantothenate (Pan), the first step in CoA biosynthesis. In Geobacillus kaustophilus (strain HTA426), this protein is Type III pantothenate kinase.